Reading from the N-terminus, the 230-residue chain is RNA polymerase sigma factor FliA (230 aa).

The tract at residues 6–78 (LWQRYVPLVR…MLDELRSRDW (73 aa)) is sigma-70 factor domain-2. The Interaction with polymerase core subunit RpoC motif lies at 33-36 (DLLQ). Residues 86–156 (NAREVASAMQ…VEPMLEGHED (71 aa)) form a sigma-70 factor domain-3 region. Positions 175 to 223 (AIEALPEREKMVLTLYYQEELNLKEIGAVLEVGESRVSQLHSQAIKRLR) are sigma-70 factor domain-4. A DNA-binding region (H-T-H motif) is located at residues 197 to 216 (LKEIGAVLEVGESRVSQLHS).

Belongs to the sigma-70 factor family. FliA subfamily.

It is found in the cytoplasm. Sigma factors are initiation factors that promote the attachment of RNA polymerase to specific initiation sites and are then released. This sigma factor controls the expression of flagella-related genes. This is RNA polymerase sigma factor FliA from Yersinia enterocolitica.